The sequence spans 239 residues: Putative CCR4-associated factor 1 homolog 8 (239 aa).

Residues D17, E19, D133, and N204 each contribute to the a divalent metal cation site.

Belongs to the CAF1 family. As to quaternary structure, component of the CCR4-NOT complex, at least composed of CRR4 and CAF1 proteins. A divalent metal cation serves as cofactor.

The protein localises to the nucleus. Its subcellular location is the cytoplasm. The catalysed reaction is Exonucleolytic cleavage of poly(A) to 5'-AMP.. Its function is as follows. Ubiquitous transcription factor required for a diverse set of processes. It is a component of the CCR4 complex involved in the control of gene expression. This Arabidopsis thaliana (Mouse-ear cress) protein is Putative CCR4-associated factor 1 homolog 8 (CAF1-8).